Consider the following 124-residue polypeptide: Large ribosomal subunit protein bL12 (124 aa).

Belongs to the bacterial ribosomal protein bL12 family. As to quaternary structure, homodimer. Part of the ribosomal stalk of the 50S ribosomal subunit. Forms a multimeric L10(L12)X complex, where L10 forms an elongated spine to which 2 to 4 L12 dimers bind in a sequential fashion. Binds GTP-bound translation factors.

Functionally, forms part of the ribosomal stalk which helps the ribosome interact with GTP-bound translation factors. Is thus essential for accurate translation. The sequence is that of Large ribosomal subunit protein bL12 from Nitrosomonas europaea (strain ATCC 19718 / CIP 103999 / KCTC 2705 / NBRC 14298).